Consider the following 508-residue polypeptide: Probable metalloreductase AIM14 (508 aa).

8 helical membrane passes run 18 to 38 (LPYG…LIVM), 70 to 90 (PLLL…VAYI), 100 to 120 (LSYV…NPIL), 137 to 157 (FVTV…SLDP), 168 to 188 (LFNF…FASV), 198 to 218 (SFYV…PIHA), 222 to 242 (VTVP…ISYI), and 347 to 367 (VAIV…KYLQ). In terms of domain architecture, Ferric oxidoreductase spans 97–214 (LGRLSYVLVI…LGQWAMVFLV (118 aa)). The FAD-binding FR-type domain maps to 241-361 (YIYYSTTVNV…GGSGISFGLS (121 aa)).

It belongs to the ferric reductase (FRE) family. AIM14 subfamily.

It localises to the membrane. Functionally, probable cell surface metalloreductase. May be involved in iron or copper homeostasis. This chain is Probable metalloreductase AIM14 (AIM14), found in Kluyveromyces lactis (strain ATCC 8585 / CBS 2359 / DSM 70799 / NBRC 1267 / NRRL Y-1140 / WM37) (Yeast).